Consider the following 362-residue polypeptide: Flagellar P-ring protein (362 aa).

The N-terminal stretch at Met1–Ala15 is a signal peptide.

This sequence belongs to the FlgI family. As to quaternary structure, the basal body constitutes a major portion of the flagellar organelle and consists of four rings (L,P,S, and M) mounted on a central rod.

The protein resides in the periplasm. The protein localises to the bacterial flagellum basal body. Assembles around the rod to form the L-ring and probably protects the motor/basal body from shearing forces during rotation. This Pseudomonas fluorescens (strain Pf0-1) protein is Flagellar P-ring protein.